A 175-amino-acid chain; its full sequence is 19.0 kDa class II heat shock protein (175 aa).

One can recognise a sHSP domain in the interval 42–165 (DRRAMANTPM…KPRVVEVKVA (124 aa)). A disordered region spans residues 145–175 (TVDKKPPPEPKKPRVVEVKVAGAGEPKGKGK). Residues 146-161 (VDKKPPPEPKKPRVVE) are compositionally biased toward basic and acidic residues.

The protein belongs to the small heat shock protein (HSP20) family. As to quaternary structure, may form oligomeric structures.

It is found in the cytoplasm. The sequence is that of 19.0 kDa class II heat shock protein (HSP19.0) from Oryza sativa subsp. japonica (Rice).